The following is a 299-amino-acid chain: MANKVDVKELLDAGVHFGHLTRRWNPNMAPYIYMERNGIHIINLYKSAAKMQEAGDALAKIAASGRKILFVATKKQAKEIVAEQAEKANMPYITERWPGGMLTNFVTIRKAVKKMASIDRMKKDGTFNSLSKKERLQVDRLRAKLEKNLGSISDMSRLPAALFVVDTTREHIAIKEAHKLNIPIFAMVDTNSDPREVDYLIPSNDDASKSISKVVSYVADSIVEGLSERKSEKSTKKKEEKASKEEKSDKAPKEKKEKKAEVPSKDAEDKKAMKEAKNDVKLESKSETLDKAKASNEEE.

A disordered region spans residues Ser-227 to Glu-299.

Belongs to the universal ribosomal protein uS2 family.

In Christiangramia forsetii (strain DSM 17595 / CGMCC 1.15422 / KT0803) (Gramella forsetii), this protein is Small ribosomal subunit protein uS2.